The following is a 416-amino-acid chain: Gamma-glutamyl phosphate reductase (416 aa).

It belongs to the gamma-glutamyl phosphate reductase family.

The protein resides in the cytoplasm. It carries out the reaction L-glutamate 5-semialdehyde + phosphate + NADP(+) = L-glutamyl 5-phosphate + NADPH + H(+). The protein operates within amino-acid biosynthesis; L-proline biosynthesis; L-glutamate 5-semialdehyde from L-glutamate: step 2/2. Catalyzes the NADPH-dependent reduction of L-glutamate 5-phosphate into L-glutamate 5-semialdehyde and phosphate. The product spontaneously undergoes cyclization to form 1-pyrroline-5-carboxylate. The sequence is that of Gamma-glutamyl phosphate reductase from Salmonella typhi.